The following is a 345-amino-acid chain: NADH-ubiquinone oxidoreductase chain 2 (345 aa).

The next 10 membrane-spanning stretches (helical) occupy residues 1 to 21, 25 to 45, 56 to 76, 92 to 114, 149 to 171, 178 to 198, 200 to 220, 241 to 261, 274 to 294, and 324 to 344; these read MNPI…VITM, NLML…PMLI, ATKY…AIVL, GLIL…FHFW, LNST…GGLN, IMAY…PYNP, LTLL…MALM, LTMI…TGFL, NCLI…FFYT, and LMFS…PQLI.

This sequence belongs to the complex I subunit 2 family. Core subunit of respiratory chain NADH dehydrogenase (Complex I) which is composed of 45 different subunits. Interacts with TMEM242.

It localises to the mitochondrion inner membrane. The enzyme catalyses a ubiquinone + NADH + 5 H(+)(in) = a ubiquinol + NAD(+) + 4 H(+)(out). Its function is as follows. Core subunit of the mitochondrial membrane respiratory chain NADH dehydrogenase (Complex I) which catalyzes electron transfer from NADH through the respiratory chain, using ubiquinone as an electron acceptor. Essential for the catalytic activity and assembly of complex I. This Mus musculus (Mouse) protein is NADH-ubiquinone oxidoreductase chain 2.